A 613-amino-acid polypeptide reads, in one-letter code: Ribosome-associated molecular chaperone SSB1 (613 aa).

Residues 1–391 form a nucleotide binding domain (NBD) region; it reads MADGVFQGAI…ILTGQSTNDD (391 aa). ATP is bound by residues 16-18, Lys73, 205-207, 271-278, and Gly342; these read TTY, GGT, and ERAKRSLS. The interval 392–402 is inter-domain linker; it reads TKDLLLLDVIP. The tract at residues 403–613 is substrate binding domain (SBD); the sequence is LSLGVAMQGN…RAVTKGMATR (211 aa). The lid domain (SBDalpha) stretch occupies residues 516-612; that stretch reads TEEIEKMISD…KRAVTKGMAT (97 aa). The Nuclear export signal motif lies at 574–582; the sequence is IEAALSDAL.

It belongs to the heat shock protein 70 family. Ssb-type Hsp70 subfamily. As to quaternary structure, binds to ribosomes. Binds close to the ribosomal tunnel exit via contacts with both ribosomal proteins and rRNA. Directly interacts with nascent polypeptides. This interaction is dependent on the ribosome-associated complex (RAC). Interacts with SSE1. Interacts with FES1.

Its subcellular location is the cytoplasm. The enzyme catalyses ATP + H2O = ADP + phosphate + H(+). Its function is as follows. Ribosome-bound, Hsp70-type chaperone that assists in the cotranslational folding of newly synthesized proteins in the cytosol. Stimulates folding by interacting with nascent chains, binding to short, largely hydrophobic sequences exposed by unfolded proteins, thereby stabilizing longer, more slowly translated, and aggregation-prone nascent polypeptides and domains that cannot fold stably until fully synthesized. The Hsp70-protein substrate interaction depends on ATP-binding and on allosteric regulation between the NBD and the SBD. The ATP-bound state is characterized by a fast exchange rate of substrate (low affinity state), while in the ADP-bound state exchange is much slower (high affinity state). During the Hsp70 cycle, the chaperone switches between the ATP-bound state (open conformation) and the ADP-bound state (closed conformation) by major conformational rearrangements involving mainly the lid domain. Ssb cooperates with a specific Hsp40/Hsp70 co-chaperone termed the ribosome-associated complex (RAC), which stimulates the ATPase activity of the ribosome-associated pool of Ssbs and switches it to the high affinity substrate binding state. Hsp110 chaperone SSE1 and FES1 act as nucleotide exchange factors that cause substrate release. This chain is Ribosome-associated molecular chaperone SSB1 (SSB1), found in Candida albicans (strain WO-1) (Yeast).